The following is a 446-amino-acid chain: Glutamine synthetase (446 aa).

The region spanning 18–103 (ENVRYLRLQF…LICDVFKTDG (86 aa)) is the GS beta-grasp domain. The GS catalytic domain maps to 110-446 (PRANLKRVLR…WEREQYIKQY (337 aa)). E134 and E136 together coordinate Mg(2+). E186 is an ATP binding site. Residues E191 and E198 each coordinate Mg(2+). L-glutamate is bound by residues 242–243 (NG) and G243. H247 lines the Mg(2+) pocket. Position 251 (S251) interacts with ATP. Residues R300, E306, and R318 each coordinate L-glutamate. The ATP site is built by R318 and R323. Residue E335 participates in Mg(2+) binding. R337 serves as a coordination point for L-glutamate.

Belongs to the glutamine synthetase family. As to quaternary structure, oligomer of 12 subunits arranged in the form of two hexagons. In its feedback-inhibited form, interacts with TnrA in order to block its DNA-binding activity. Mg(2+) serves as cofactor.

The protein localises to the cytoplasm. It catalyses the reaction L-glutamate + NH4(+) + ATP = L-glutamine + ADP + phosphate + H(+). With respect to regulation, inhibited by glutamine. Glutamine synthetase (GS) is an unusual multitasking protein that functions as an enzyme, a transcription coregulator, and a chaperone in ammonium assimilation and in the regulation of genes involved in nitrogen metabolism. It catalyzes the ATP-dependent biosynthesis of glutamine from glutamate and ammonia. Feedback-inhibited GlnA also interacts with and regulates the activity of the transcriptional regulator TnrA. During nitrogen limitation, TnrA is in its DNA-binding active state and turns on the transcription of genes required for nitrogen assimilation. Under conditions of nitrogen excess, feedback-inhibited GlnA forms a stable complex with TnrA, which inhibits its DNA-binding activity. In contrast, feedback-inhibited GlnA acts as a chaperone to stabilize the DNA-binding activity of GlnR, which represses the transcription of nitrogen assimilation genes. The protein is Glutamine synthetase of Staphylococcus epidermidis (strain ATCC 35984 / DSM 28319 / BCRC 17069 / CCUG 31568 / BM 3577 / RP62A).